Here is a 176-residue protein sequence, read N- to C-terminus: MSSNQQPVVVGKIGSTYGVKGWMKITAYTDSVEGIFDYSPWFLKEHGEWREVKVSQWRFHGKAVVAELEGVSNREQAQMLTNCEIGILAEQMPELPEDEFYWRDLIGCEVLNTKGYNLGKVDQILETGSNDVLMVKANAKDAFGKTERMIPYLPDQFVLEVKLSEKQIIVDWDPDF.

The region spanning 97–176 (EDEFYWRDLI…QIIVDWDPDF (80 aa)) is the PRC barrel domain.

This sequence belongs to the RimM family. Binds ribosomal protein uS19.

Its subcellular location is the cytoplasm. Functionally, an accessory protein needed during the final step in the assembly of 30S ribosomal subunit, possibly for assembly of the head region. Essential for efficient processing of 16S rRNA. May be needed both before and after RbfA during the maturation of 16S rRNA. It has affinity for free ribosomal 30S subunits but not for 70S ribosomes. This Shewanella amazonensis (strain ATCC BAA-1098 / SB2B) protein is Ribosome maturation factor RimM.